The chain runs to 135 residues: Large ribosomal subunit protein uL16c (135 aa).

Residues 1–17 (MLSPKRTKFRKQHRNRM) show a composition bias toward basic residues. The disordered stretch occupies residues 1 to 22 (MLSPKRTKFRKQHRNRMNGKAS).

Belongs to the universal ribosomal protein uL16 family. Part of the 50S ribosomal subunit.

It is found in the plastid. It localises to the chloroplast. This Gracilaria tenuistipitata (Red alga) protein is Large ribosomal subunit protein uL16c.